A 569-amino-acid polypeptide reads, in one-letter code: Urease subunit alpha (569 aa).

One can recognise a Urease domain in the interval 131-569 (GGIDTHIHFI…LPMAQRYFLL (439 aa)). Residues H136, H138, and K219 each coordinate Ni(2+). The residue at position 219 (K219) is an N6-carboxylysine. H221 is a substrate binding site. Ni(2+) is bound by residues H248 and H274. Residue H322 is the Proton donor of the active site. D362 provides a ligand contact to Ni(2+).

It belongs to the metallo-dependent hydrolases superfamily. Urease alpha subunit family. Heterotrimer of UreA (gamma), UreB (beta) and UreC (alpha) subunits. Three heterotrimers associate to form the active enzyme. The cofactor is Ni cation. Post-translationally, carboxylation allows a single lysine to coordinate two nickel ions.

It is found in the cytoplasm. It catalyses the reaction urea + 2 H2O + H(+) = hydrogencarbonate + 2 NH4(+). The protein operates within nitrogen metabolism; urea degradation; CO(2) and NH(3) from urea (urease route): step 1/1. The protein is Urease subunit alpha of Synechococcus sp. (strain RCC307).